Consider the following 137-residue polypeptide: uncharacterized protein (137 aa).

Residues 4–118 enclose the CENP-V/GFA domain; that stretch reads YEGNCLCKAI…CIDDKPDCYD (115 aa). Residues cysteine 8, cysteine 10, cysteine 27, cysteine 29, cysteine 32, cysteine 71, and cysteine 74 each contribute to the Zn(2+) site.

The protein belongs to the Gfa family. The cofactor is Zn(2+).

Its subcellular location is the cytoplasm. The protein localises to the nucleus. This is an uncharacterized protein from Schizosaccharomyces pombe (strain 972 / ATCC 24843) (Fission yeast).